Consider the following 693-residue polypeptide: Elongation factor G (693 aa).

The tr-type G domain occupies 8–282 (KNTRNIGIMA…AVIDYLPSPL (275 aa)). GTP-binding positions include 17 to 24 (AHIDAGKT), 81 to 85 (DTPGH), and 135 to 138 (NKMD).

The protein belongs to the TRAFAC class translation factor GTPase superfamily. Classic translation factor GTPase family. EF-G/EF-2 subfamily.

It localises to the cytoplasm. Its function is as follows. Catalyzes the GTP-dependent ribosomal translocation step during translation elongation. During this step, the ribosome changes from the pre-translocational (PRE) to the post-translocational (POST) state as the newly formed A-site-bound peptidyl-tRNA and P-site-bound deacylated tRNA move to the P and E sites, respectively. Catalyzes the coordinated movement of the two tRNA molecules, the mRNA and conformational changes in the ribosome. The chain is Elongation factor G from Staphylococcus epidermidis (strain ATCC 35984 / DSM 28319 / BCRC 17069 / CCUG 31568 / BM 3577 / RP62A).